Consider the following 360-residue polypeptide: Aspartate beta-hydroxylase domain-containing protein 1 (360 aa).

Over 1-45 the chain is Cytoplasmic; sequence MWKGGNQEAVIEGSGGELGVPGSWGLQDAACHLARASLPIMFPWP. A helical transmembrane segment spans residues 46–68; sequence LPLGSSALTMLLGALTSLFLWYC. The Lumenal portion of the chain corresponds to 69–360; that stretch reads YRLGSQDMQA…ALDFVFAPDP (292 aa).

It belongs to the aspartyl/asparaginyl beta-hydroxylase family.

Its subcellular location is the membrane. The protein is Aspartate beta-hydroxylase domain-containing protein 1 (Asphd1) of Mus musculus (Mouse).